A 131-amino-acid chain; its full sequence is MRHYEIVFMVHPDQSEQVPGMIERYTGAITGAEGKIHRLEDWGRRQLAYPINKLHKAHYVLLNVEAPQEVIDELETNFRFNDAVIRSMVMRTKHAVTEASPMVKAKDERRERRDDFANETADDADAGDSEE.

The disordered stretch occupies residues 98–131 (EASPMVKAKDERRERRDDFANETADDADAGDSEE). Basic and acidic residues predominate over residues 104–116 (KAKDERRERRDDF). The segment covering 120-131 (TADDADAGDSEE) has biased composition (acidic residues).

It belongs to the bacterial ribosomal protein bS6 family.

Its function is as follows. Binds together with bS18 to 16S ribosomal RNA. The sequence is that of Small ribosomal subunit protein bS6 from Citrobacter koseri (strain ATCC BAA-895 / CDC 4225-83 / SGSC4696).